The primary structure comprises 751 residues: Photosystem I P700 chlorophyll a apoprotein A1 (751 aa).

8 consecutive transmembrane segments (helical) span residues Ile-73 to Ala-96, Leu-159 to His-182, Met-198 to Leu-222, Thr-294 to Tyr-312, Trp-349 to Tyr-372, Leu-388 to Val-414, Ala-436 to His-458, and Phe-533 to Leu-551. [4Fe-4S] cluster is bound by residues Cys-575 and Cys-584. Helical transmembrane passes span His-591–Trp-612 and Leu-665–Phe-687. His-676 contributes to the chlorophyll a' binding site. Residues Met-684 and Tyr-692 each coordinate chlorophyll a. Trp-693 is a binding site for phylloquinone. Residues Ala-725–Ala-745 traverse the membrane as a helical segment.

It belongs to the PsaA/PsaB family. As to quaternary structure, the PsaA/B heterodimer binds the P700 chlorophyll special pair and subsequent electron acceptors. PSI consists of a core antenna complex that captures photons, and an electron transfer chain that converts photonic excitation into a charge separation. The eukaryotic PSI reaction center is composed of at least 11 subunits. Requires P700 is a chlorophyll a/chlorophyll a' dimer, A0 is one or more chlorophyll a, A1 is one or both phylloquinones and FX is a shared 4Fe-4S iron-sulfur center. as cofactor.

The protein localises to the plastid. The protein resides in the chloroplast thylakoid membrane. The catalysed reaction is reduced [plastocyanin] + hnu + oxidized [2Fe-2S]-[ferredoxin] = oxidized [plastocyanin] + reduced [2Fe-2S]-[ferredoxin]. Its function is as follows. PsaA and PsaB bind P700, the primary electron donor of photosystem I (PSI), as well as the electron acceptors A0, A1 and FX. PSI is a plastocyanin/cytochrome c6-ferredoxin oxidoreductase, converting photonic excitation into a charge separation, which transfers an electron from the donor P700 chlorophyll pair to the spectroscopically characterized acceptors A0, A1, FX, FA and FB in turn. Oxidized P700 is reduced on the lumenal side of the thylakoid membrane by plastocyanin or cytochrome c6. The chain is Photosystem I P700 chlorophyll a apoprotein A1 from Nephroselmis olivacea (Green alga).